The following is a 412-amino-acid chain: Gamma-glutamyl phosphate reductase (412 aa).

This sequence belongs to the gamma-glutamyl phosphate reductase family.

The protein localises to the cytoplasm. It catalyses the reaction L-glutamate 5-semialdehyde + phosphate + NADP(+) = L-glutamyl 5-phosphate + NADPH + H(+). It participates in amino-acid biosynthesis; L-proline biosynthesis; L-glutamate 5-semialdehyde from L-glutamate: step 2/2. Its function is as follows. Catalyzes the NADPH-dependent reduction of L-glutamate 5-phosphate into L-glutamate 5-semialdehyde and phosphate. The product spontaneously undergoes cyclization to form 1-pyrroline-5-carboxylate. The chain is Gamma-glutamyl phosphate reductase from Streptococcus suis (strain 98HAH33).